We begin with the raw amino-acid sequence, 154 residues long: 6,7-dimethyl-8-ribityllumazine synthase (154 aa).

5-amino-6-(D-ribitylamino)uracil-binding positions include Phe26, 60–62, and 84–86; these read ALE and CII. Residue 89 to 90 coordinates (2S)-2-hydroxy-3-oxobutyl phosphate; that stretch reads ET. His92 functions as the Proton donor in the catalytic mechanism. Asn117 provides a ligand contact to 5-amino-6-(D-ribitylamino)uracil. Arg131 is a (2S)-2-hydroxy-3-oxobutyl phosphate binding site.

The protein belongs to the DMRL synthase family.

The catalysed reaction is (2S)-2-hydroxy-3-oxobutyl phosphate + 5-amino-6-(D-ribitylamino)uracil = 6,7-dimethyl-8-(1-D-ribityl)lumazine + phosphate + 2 H2O + H(+). Its pathway is cofactor biosynthesis; riboflavin biosynthesis; riboflavin from 2-hydroxy-3-oxobutyl phosphate and 5-amino-6-(D-ribitylamino)uracil: step 1/2. Its function is as follows. Catalyzes the formation of 6,7-dimethyl-8-ribityllumazine by condensation of 5-amino-6-(D-ribitylamino)uracil with 3,4-dihydroxy-2-butanone 4-phosphate. This is the penultimate step in the biosynthesis of riboflavin. This chain is 6,7-dimethyl-8-ribityllumazine synthase, found in Paracidovorax citrulli (strain AAC00-1) (Acidovorax citrulli).